The chain runs to 454 residues: Tryptophanase (454 aa).

K256 carries the N6-(pyridoxal phosphate)lysine modification.

Belongs to the beta-eliminating lyase family. Homotetramer. Requires pyridoxal 5'-phosphate as cofactor.

It carries out the reaction L-tryptophan + H2O = indole + pyruvate + NH4(+). The protein operates within amino-acid degradation; L-tryptophan degradation via pyruvate pathway; indole and pyruvate from L-tryptophan: step 1/1. In Hyphomonas neptunium (strain ATCC 15444), this protein is Tryptophanase.